The chain runs to 226 residues: NADH-ubiquinone oxidoreductase chain 6 (226 aa).

5 helical membrane-spanning segments follow: residues 2–22 (STLGLLIMLLGIIIMCTLVIL), 28–48 (IYSILNLIVIYGCYASILLTV), 56–76 (IYILVNVGAIAVLFLFIVMMI), 90–110 (YNIYMIVGIIGVVGLLGILIT), and 169–189 (IWFIMACIILLIGMVGVIYIT).

This sequence belongs to the complex I subunit 6 family.

The protein localises to the mitochondrion membrane. It catalyses the reaction a ubiquinone + NADH + 5 H(+)(in) = a ubiquinol + NAD(+) + 4 H(+)(out). In terms of biological role, core subunit of the mitochondrial membrane respiratory chain NADH dehydrogenase (Complex I) that is believed to belong to the minimal assembly required for catalysis. Complex I functions in the transfer of electrons from NADH to the respiratory chain. The immediate electron acceptor for the enzyme is believed to be ubiquinone. This chain is NADH-ubiquinone oxidoreductase chain 6 (nad6), found in Dictyostelium discoideum (Social amoeba).